Consider the following 165-residue polypeptide: MATLLFDDGREATAAEIEAIARAHRIVVEHRPVPAALAETLARPLLDDTAAATVLDALPPRPEFPSRDLIVLHPERPDNEQLATKFENWHRHAGDEIRHILDGAGIFGVIVDGQRADLHVGPGDFIVVPAGLEHNFRLTAARRIKAVRYLSDAEGWSAEFTGRAA.

Fe(2+) is bound by residues His90, His92, Glu96, and His134. Residues His90, His92, Glu96, and His134 each contribute to the Ni(2+) site.

The protein belongs to the acireductone dioxygenase (ARD) family. In terms of assembly, monomer. It depends on Fe(2+) as a cofactor. Ni(2+) is required as a cofactor.

It carries out the reaction 1,2-dihydroxy-5-(methylsulfanyl)pent-1-en-3-one + O2 = 3-(methylsulfanyl)propanoate + CO + formate + 2 H(+). The catalysed reaction is 1,2-dihydroxy-5-(methylsulfanyl)pent-1-en-3-one + O2 = 4-methylsulfanyl-2-oxobutanoate + formate + 2 H(+). It functions in the pathway amino-acid biosynthesis; L-methionine biosynthesis via salvage pathway; L-methionine from S-methyl-5-thio-alpha-D-ribose 1-phosphate: step 5/6. Catalyzes 2 different reactions between oxygen and the acireductone 1,2-dihydroxy-3-keto-5-methylthiopentene (DHK-MTPene) depending upon the metal bound in the active site. Fe-containing acireductone dioxygenase (Fe-ARD) produces formate and 2-keto-4-methylthiobutyrate (KMTB), the alpha-ketoacid precursor of methionine in the methionine recycle pathway. Ni-containing acireductone dioxygenase (Ni-ARD) produces methylthiopropionate, carbon monoxide and formate, and does not lie on the methionine recycle pathway. The protein is Acireductone dioxygenase of Rhodopseudomonas palustris (strain TIE-1).